The chain runs to 224 residues: Protein PLANT CADMIUM RESISTANCE 6 (224 aa).

Residues 131-151 (GMLYGLICCLFAIPCVYTCTF) traverse the membrane as a helical segment.

This sequence belongs to the cornifelin family.

The protein resides in the membrane. Its function is as follows. May be involved in heavy metals transport. The sequence is that of Protein PLANT CADMIUM RESISTANCE 6 (PCR6) from Arabidopsis thaliana (Mouse-ear cress).